The sequence spans 539 residues: BTB/POZ domain-containing protein 6 (539 aa).

The signal sequence occupies residues 1–23 (MLLPLACLHGRVAQCLTSLLVLA). Residues 137 to 207 (ADVHFIVGAL…MYSDEIDLEA (71 aa)) form the BTB domain.

It is found in the cytoplasm. In terms of biological role, adapter protein for the cul3 E3 ubiquitin-protein ligase complex. Involved in late neuronal development and muscle formation. The sequence is that of BTB/POZ domain-containing protein 6 (Btbd6) from Mus musculus (Mouse).